Consider the following 252-residue polypeptide: 5'-nucleotidase SurE (252 aa).

Residues Asp-8, Asp-9, Ser-40, and Asn-93 each coordinate a divalent metal cation.

This sequence belongs to the SurE nucleotidase family. A divalent metal cation is required as a cofactor.

It localises to the cytoplasm. The catalysed reaction is a ribonucleoside 5'-phosphate + H2O = a ribonucleoside + phosphate. Its function is as follows. Nucleotidase that shows phosphatase activity on nucleoside 5'-monophosphates. This is 5'-nucleotidase SurE from Erythrobacter litoralis (strain HTCC2594).